The chain runs to 518 residues: Arp2/3 complex-activating protein rickA (518 aa).

Residues 310 to 518 (SAAQLQSAET…ERNAKQSQQR (209 aa)) form a disordered region. Pro residues-rich tracts occupy residues 344-354 (TPPPAPPPPMP) and 382-401 (VPPP…PPPV). A compositionally biased stretch (polar residues) spans 418–430 (QPRPAVDTTNLMK). One can recognise a WH2 domain in the interval 424–441 (DTTNLMKQIQGGFNLKKI). The span at 439-461 (KKIEYGEDGKPIPKNKEDTKETS) shows a compositional bias: basic and acidic residues. Over residues 488-498 (GTDSGWASDVS) the composition is skewed to polar residues.

As to quaternary structure, homodimer.

The protein resides in the cell surface. Functionally, recruits and activates the Arp2/3 complex, which in turn leads to actin polymerization, promoting Rickettsia motility during infection. This chain is Arp2/3 complex-activating protein rickA (rickA), found in Rickettsia bellii (strain RML369-C).